The primary structure comprises 378 residues: Probable E3 ubiquitin-protein ligase LUL3 (378 aa).

The segment covering 1-21 has biased composition (basic residues); it reads MGISLSKRRRDNNNNHHHPHH. The tract at residues 1 to 79 is disordered; that stretch reads MGISLSKRRR…PPSQISYRPY (79 aa). Glycine 2 carries N-myristoyl glycine lipidation. 2 stretches are compositionally biased toward pro residues: residues 29–38 and 55–72; these read DPPPQQPPPQ and SLPPPPAQPPSSSQPPPS. Positions 164–283 are DAR2 domain; the sequence is FVFDALFDGS…GSFKVKVMKQ (120 aa). The segment at 321 to 360 adopts an RING-type; atypical zinc-finger fold; that stretch reads CVICLTEPKDTAVMPCRHLCLCSDCAEELRFQTNKCPICR.

It belongs to the RING-type zinc finger family. LOG2 subfamily. Myristoylated (in vitro).

It catalyses the reaction S-ubiquitinyl-[E2 ubiquitin-conjugating enzyme]-L-cysteine + [acceptor protein]-L-lysine = [E2 ubiquitin-conjugating enzyme]-L-cysteine + N(6)-ubiquitinyl-[acceptor protein]-L-lysine.. It functions in the pathway protein modification; protein ubiquitination. Acts as an E3 ubiquitin-protein ligase, or as part of E3 complex, which accepts ubiquitin from specific E2 ubiquitin-conjugating enzymes and then transfers it to substrates (in vitro). The chain is Probable E3 ubiquitin-protein ligase LUL3 (LUL3) from Arabidopsis thaliana (Mouse-ear cress).